A 267-amino-acid chain; its full sequence is Cysteine protease avirulence protein AvrPphB (267 aa).

The N-myristoyl glycine; by host moiety is linked to residue glycine 63. Catalysis depends on residues cysteine 98, histidine 212, and aspartate 227.

It belongs to the peptidase C58 family. As to quaternary structure, in infected plant cells, the 28 kDa product interacts with PBS1. Post-translationally, autocleaved. This function is essential for myristoylation in infected plant cell and for eliciting the plant hypersensitive response. In terms of processing, myristoylation of 28 kDa product in infected plant cells; it mediates the localization to membranes.

It is found in the secreted. The protein localises to the host membrane. Functionally, cysteine protease avirulence protein, which is essential during infection of plant cells from cultivar-specific of beans and Arabidopsis thaliana. The autocleavage of the protein is required for virulence function. May act by affecting the plant defense system. In plants lacking R3 or RPS5 resistance genes, it probably impairs the plant defense system and leads to the bacteria multiplication. In contrast, in plants containing the R3 or RPS5 protein, it is unable to induce disease symptoms, explaining its avirulence name. The 7 kDa product is required for the type-III translocation from Pseudomonas strains to the plant, but are partially dispensable for effector recognition following in planta expression. In infected plants, it acts by cleaving the PBS1 protein, which leads to resistance or disease, depending on the presence or absence of RPS5, respectively. Targets the Arabidopsis kinases PBS1, BIK1, PBL1, PBL2, PBL3, PBL5, PBL7, PBL9 and PBL11 for cleavage in vitro. Can block recognition of AvrB avirulence factor by plant cells by cleaving Arabidopsis RIPK kinase and suppressing Arabidopsis RPM1 activation. Cannot block AvrRpm1-induced activation of RPM1. This Pseudomonas savastanoi pv. phaseolicola (Pseudomonas syringae pv. phaseolicola) protein is Cysteine protease avirulence protein AvrPphB (avrPph3).